A 195-amino-acid polypeptide reads, in one-letter code: dCTP deaminase (195 aa).

Residues 110–115 (RSSLAR), Asp-128, 136–138 (VLE), Tyr-171, Lys-178, and Gln-182 contribute to the dCTP site. The active-site Proton donor/acceptor is Glu-138.

Belongs to the dCTP deaminase family. As to quaternary structure, homotrimer.

It catalyses the reaction dCTP + H2O + H(+) = dUTP + NH4(+). The protein operates within pyrimidine metabolism; dUMP biosynthesis; dUMP from dCTP (dUTP route): step 1/2. In terms of biological role, catalyzes the deamination of dCTP to dUTP. In Idiomarina loihiensis (strain ATCC BAA-735 / DSM 15497 / L2-TR), this protein is dCTP deaminase.